The chain runs to 227 residues: Cytochrome c oxidase subunit 2 (227 aa).

Residues 1-26 (MSTWKNLFLQDSASPLMELLMCFHDH) are Mitochondrial intermembrane-facing. The chain crosses the membrane as a helical span at residues 27 to 48 (AMLILILITIMVSQMLLSMLFN). Residues 49–62 (KLSHRYLLEGQLIE) lie on the Mitochondrial matrix side of the membrane. A helical membrane pass occupies residues 63–82 (TIWTIIPAIILILIALPSLR). Residues 83–227 (LLYILDEINN…LFLNWVISKA (145 aa)) lie on the Mitochondrial intermembrane side of the membrane. His161, Cys196, Glu198, Cys200, His204, and Met207 together coordinate Cu cation. Glu198 serves as a coordination point for Mg(2+).

This sequence belongs to the cytochrome c oxidase subunit 2 family. Component of the cytochrome c oxidase (complex IV, CIV), a multisubunit enzyme composed of a catalytic core of 3 subunits and several supernumerary subunits. The complex exists as a monomer or a dimer and forms supercomplexes (SCs) in the inner mitochondrial membrane with ubiquinol-cytochrome c oxidoreductase (cytochrome b-c1 complex, complex III, CIII). Cu cation serves as cofactor.

Its subcellular location is the mitochondrion inner membrane. It carries out the reaction 4 Fe(II)-[cytochrome c] + O2 + 8 H(+)(in) = 4 Fe(III)-[cytochrome c] + 2 H2O + 4 H(+)(out). Functionally, component of the cytochrome c oxidase, the last enzyme in the mitochondrial electron transport chain which drives oxidative phosphorylation. The respiratory chain contains 3 multisubunit complexes succinate dehydrogenase (complex II, CII), ubiquinol-cytochrome c oxidoreductase (cytochrome b-c1 complex, complex III, CIII) and cytochrome c oxidase (complex IV, CIV), that cooperate to transfer electrons derived from NADH and succinate to molecular oxygen, creating an electrochemical gradient over the inner membrane that drives transmembrane transport and the ATP synthase. Cytochrome c oxidase is the component of the respiratory chain that catalyzes the reduction of oxygen to water. Electrons originating from reduced cytochrome c in the intermembrane space (IMS) are transferred via the dinuclear copper A center (CU(A)) of subunit 2 and heme A of subunit 1 to the active site in subunit 1, a binuclear center (BNC) formed by heme A3 and copper B (CU(B)). The BNC reduces molecular oxygen to 2 water molecules using 4 electrons from cytochrome c in the IMS and 4 protons from the mitochondrial matrix. The protein is Cytochrome c oxidase subunit 2 (COII) of Sitophilus granarius (Granary weevil).